The sequence spans 293 residues: Ribulose bisphosphate carboxylase/oxygenase activase, chloroplastic (293 aa).

Residue 75–82 (PGTGKTTV) coordinates ATP.

Belongs to the CbxX/CfxQ family. Forms homooligomers. Forms heterohexameric rings with the nuclear-encoded Rca subunit consisting of 3 of each nuclear- and plastidial-encoded subunits that alternate in the ring.

The protein localises to the plastid. It is found in the chloroplast. Required for the expression of ribulose 1,5-bisphosphate carboxylase/oxygenase (RuBisCo). ATPase involved in the activation of red-type RuBisCo, which tends to form inactive complexes with its substrate ribulose 1,5-bisphosphate (RuBP). Catalyzes the release of RuBP from inhibited RuBisCo in an ATP-dependent manner. Activation of RuBisCO involves the ATP-dependent carboxylation of the epsilon-amino group of lysine leading to a carbamate structure. The nuclear-encoded subunit plays a more critical role in activase function than the plastidial-encoded subunit. The polypeptide is Ribulose bisphosphate carboxylase/oxygenase activase, chloroplastic (Cyanidioschyzon merolae (strain NIES-3377 / 10D) (Unicellular red alga)).